We begin with the raw amino-acid sequence, 556 residues long: Formate--tetrahydrofolate ligase 1 (556 aa).

Position 65 to 72 (65 to 72) interacts with ATP; that stretch reads TPAGEGKS.

This sequence belongs to the formate--tetrahydrofolate ligase family.

The enzyme catalyses (6S)-5,6,7,8-tetrahydrofolate + formate + ATP = (6R)-10-formyltetrahydrofolate + ADP + phosphate. The protein operates within one-carbon metabolism; tetrahydrofolate interconversion. The polypeptide is Formate--tetrahydrofolate ligase 1 (Streptococcus pyogenes serotype M28 (strain MGAS6180)).